Reading from the N-terminus, the 218-residue chain is Host range factor 1 (218 aa).

Its function is as follows. Facilitates AcMNPV replication in two non-permissive cell lines, IPLB-Ld652Y and IPLB-LdFB. This Lepidoptera (butterflies and moths) protein is Host range factor 1 (HRF-1).